Here is a 478-residue protein sequence, read N- to C-terminus: MIQVLLVTICLAVFPYQGSSIILESGNVNDYEVVYPRKVTALPKGAVQPKYEDAMQYEFKVNGEPVVLHLEKNKGLFSEDYSETHYSPDGREITTYPLVEDHCYYHGRIENDADSTASISACNGLKGHFKLQGELYLIEPLKFPDSEAHAVFKYENVEKEDNAPKMCGVTQNWKSYEPIKKASQLNLTPEQQRFPQRYIELVIVADHRMFTKYNSNLNTIRIWVHEIVNTINVFYRSLHIVVSLTDLEIWSNQDQINVQSAAADTLEAFGEWRETVLLNRISHDNAQLLTAINFQGNIIGRAYTGSMCDPRKSVGIITDHSAINLWVAVTMAHELAHNLGISHDGNQCHCDANSCIMSEELSEELSFEFSDCSLNQYQTYLTDHNPQCMLNEPLGTDTVSRNELLEAGEECDCGSPANPCCDAATCKLRPGAQCAEGLCCDQCRFIKKGKICRRARGDNPDDRCTGQSADCPRNRFHA.

Residues 1 to 20 (MIQVLLVTICLAVFPYQGSS) form the signal peptide. A propeptide spanning residues 21–190 (IILESGNVND…KASQLNLTPE (170 aa)) is cleaved from the precursor. One can recognise a Peptidase M12B domain in the interval 197 to 393 (RYIELVIVAD…HNPQCMLNEP (197 aa)). Residues glutamate 200 and aspartate 284 each contribute to the Ca(2+) site. Intrachain disulfides connect cysteine 308-cysteine 388, cysteine 348-cysteine 372, and cysteine 350-cysteine 355. Position 333 (histidine 333) interacts with Zn(2+). The active site involves glutamate 334. Zn(2+) contacts are provided by histidine 337 and histidine 343. Positions 388 and 391 each coordinate Ca(2+). The propeptide occupies 394 to 405 (LGTDTVSRNELL). The region spanning 414-478 (GSPANPCCDA…ADCPRNRFHA (65 aa)) is the Disintegrin domain. Intrachain disulfides connect cysteine 420/cysteine 443, cysteine 434/cysteine 440, cysteine 439/cysteine 464, and cysteine 452/cysteine 471. The Cell attachment site motif lies at 456 to 458 (RGD).

This sequence belongs to the venom metalloproteinase (M12B) family. P-II subfamily. P-IIe sub-subfamily. Heterodimer; disulfide-linked (disintegrin). Requires Zn(2+) as cofactor. Expressed by the venom gland.

Its subcellular location is the secreted. Functionally, impairs hemostasis in the envenomed animal. In terms of biological role, this recombinant protein inhibits ADP-induced platelet aggregation in whole human blood and this effect is concentration-dependent with an IC(50) of 34 nM. This Crotalus viridis viridis (Prairie rattlesnake) protein is Zinc metalloproteinase/disintegrin VMP-II.